The chain runs to 144 residues: Large ribosomal subunit protein uL11 (144 aa).

This sequence belongs to the universal ribosomal protein uL11 family. In terms of assembly, part of the ribosomal stalk of the 50S ribosomal subunit. Interacts with L10 and the large rRNA to form the base of the stalk. L10 forms an elongated spine to which L12 dimers bind in a sequential fashion forming a multimeric L10(L12)X complex. One or more lysine residues are methylated.

In terms of biological role, forms part of the ribosomal stalk which helps the ribosome interact with GTP-bound translation factors. This Corynebacterium efficiens (strain DSM 44549 / YS-314 / AJ 12310 / JCM 11189 / NBRC 100395) protein is Large ribosomal subunit protein uL11.